A 395-amino-acid polypeptide reads, in one-letter code: L-rhamnonate dehydratase (395 aa).

Residues histidine 23 and arginine 49 each coordinate substrate. Mg(2+) is bound by residues aspartate 215, glutamate 241, and glutamate 269. Histidine 319 functions as the Proton acceptor in the catalytic mechanism. A substrate-binding site is contributed by glutamate 339.

It belongs to the mandelate racemase/muconate lactonizing enzyme family. RhamD subfamily. In terms of assembly, homooctamer; tetramer of dimers. Mg(2+) is required as a cofactor.

The catalysed reaction is L-rhamnonate = 2-dehydro-3-deoxy-L-rhamnonate + H2O. Its function is as follows. Catalyzes the dehydration of L-rhamnonate to 2-keto-3-deoxy-L-rhamnonate (KDR). This chain is L-rhamnonate dehydratase (rhmD), found in Polaromonas sp. (strain JS666 / ATCC BAA-500).